Reading from the N-terminus, the 312-residue chain is Putative clathrin assembly protein At2g01920 (312 aa).

The ENTH domain occupies 21–152 (LITATDEKFT…ILYYNKNMIR (132 aa)).

It is found in the membrane. It localises to the clathrin-coated pit. The protein localises to the golgi apparatus. Its subcellular location is the cytoplasmic vesicle. The protein resides in the clathrin-coated vesicle. This is Putative clathrin assembly protein At2g01920 from Arabidopsis thaliana (Mouse-ear cress).